The following is a 147-amino-acid chain: Large ribosomal subunit protein uL15 (147 aa).

The span at 1–13 (MRLHDLKPAEGAR) shows a compositional bias: basic and acidic residues. Positions 1 to 58 (MRLHDLKPAEGARRERKRVGRGIGSGHGKTSGRGQKGQKARSGGGVRPGFEGGQMPLT) are disordered. Gly residues-rich tracts occupy residues 21–35 (RGIG…GRGQ) and 42–52 (SGGGVRPGFEG).

It belongs to the universal ribosomal protein uL15 family. Part of the 50S ribosomal subunit.

Functionally, binds to the 23S rRNA. In Thermoanaerobacter sp. (strain X514), this protein is Large ribosomal subunit protein uL15.